The sequence spans 336 residues: Probable GTPase MT1543 (336 aa).

GTP is bound by residues 67 to 75 (GVPGVGKST), aspartate 209, and 245 to 247 (SAV).

Belongs to the SIMIBI class G3E GTPase family. ArgK/MeaB subfamily. As to quaternary structure, homodimer.

Functionally, probable GTPase. May also bind and hydrolyze ATP. May function as chaperone. In Mycobacterium tuberculosis (strain CDC 1551 / Oshkosh), this protein is Probable GTPase MT1543.